The primary structure comprises 248 residues: NH(3)-dependent NAD(+) synthetase (248 aa).

30-37 (GLSGGIDS) lines the ATP pocket. Mg(2+) is bound at residue Asp-36. Residue Arg-114 participates in deamido-NAD(+) binding. Residue Thr-134 participates in ATP binding. Glu-139 is a Mg(2+) binding site. Lys-147 and Asp-154 together coordinate deamido-NAD(+). ATP contacts are provided by Lys-163 and Thr-185. 232 to 233 (HK) contacts deamido-NAD(+).

This sequence belongs to the NAD synthetase family. As to quaternary structure, homodimer.

The enzyme catalyses deamido-NAD(+) + NH4(+) + ATP = AMP + diphosphate + NAD(+) + H(+). Its pathway is cofactor biosynthesis; NAD(+) biosynthesis; NAD(+) from deamido-NAD(+) (ammonia route): step 1/1. In terms of biological role, catalyzes the ATP-dependent amidation of deamido-NAD to form NAD. Uses ammonia as a nitrogen source. The protein is NH(3)-dependent NAD(+) synthetase of Mycoplasma genitalium (strain ATCC 33530 / DSM 19775 / NCTC 10195 / G37) (Mycoplasmoides genitalium).